The chain runs to 416 residues: Histidine--tRNA ligase (416 aa).

This sequence belongs to the class-II aminoacyl-tRNA synthetase family.

It localises to the cytoplasm. It carries out the reaction tRNA(His) + L-histidine + ATP = L-histidyl-tRNA(His) + AMP + diphosphate + H(+). This Methanococcus maripaludis (strain DSM 14266 / JCM 13030 / NBRC 101832 / S2 / LL) protein is Histidine--tRNA ligase.